Here is a 433-residue protein sequence, read N- to C-terminus: 2,2-dialkylglycine decarboxylase (433 aa).

The residue at position 272 (Lys-272) is an N6-(pyridoxal phosphate)lysine.

This sequence belongs to the class-III pyridoxal-phosphate-dependent aminotransferase family. As to quaternary structure, homotetramer. Requires pyridoxal 5'-phosphate as cofactor.

The enzyme catalyses 2,2-dialkylglycine + pyruvate + H(+) = dialkyl ketone + L-alanine + CO2. Its function is as follows. The dialkylglycine decarboxylase is of interest because it normally catalyzes both decarboxylation and amino transfer. It may be more properly described as a decarboxylating aminotransferase rather than an aminotransferring decarboxylase. In Burkholderia cepacia (Pseudomonas cepacia), this protein is 2,2-dialkylglycine decarboxylase (dgdA).